The sequence spans 349 residues: Dehydrogenase FPY6 (349 aa).

It belongs to the Gfo/Idh/MocA family.

Its pathway is secondary metabolite biosynthesis. In terms of biological role, dehydrogenase; part of the gene cluster that mediates the biosynthesis of the gamma-pyrones fusapyrone (FPY) and deoxyfusapyrone (dFPY). FPY is an undecaketide and thus likely synthesized by the polyketide synthase FPY1 from acetyl-CoA functioning as starter unit and the addition of 10 malonyl-CoA extender units by successive Claisen-condensations. Next to this, FPY shares some rare features: C-glycosylated 4-deoxyglucose at C-3, a gem-dimethyl group at C-13, and an alpha-beta to beta-gamma double bond shift at C-20. During FPY biosynthesis mono-C-methyl groups are transferred to the tetra-, penta-, hexa- and heptaketide, while two C-methyl groups are transferred to the nonaketide, suggesting that the CMet domain is programmed to selectively catalyze two successive C-alpha-methylation reactions of the nonaketide, while other alpha-carbons are non- or mono-methylated only. While the origin of the 4'-deoxyglucose moiety remains opaque, its transfer to C-3 is most likely mediated by the C-glycosyltransferase FPY2. Next to this, the hydroxyl group present at C-33 and discriminating between FPY and dFPY, is likely to be installed by the cytochrome P450 monooxygenase FPY7. No putative function can be predicted for the remaining genes FPY3-FPY6. The protein is Dehydrogenase FPY6 of Fusarium mangiferae (Mango malformation disease fungus).